The primary structure comprises 378 residues: Chaperone protein DnaJ (378 aa).

One can recognise a J domain in the interval 5–70; that stretch reads DYYETLGVSQ…QKRAAYDQYG (66 aa). The CR-type zinc finger occupies 134 to 212; that stretch reads GKSLEIKVPT…CRGQGRVEKT (79 aa). Residues cysteine 147, cysteine 150, cysteine 164, cysteine 167, cysteine 186, cysteine 189, cysteine 200, and cysteine 203 each coordinate Zn(2+). CXXCXGXG motif repeat units lie at residues 147 to 154, 164 to 171, 186 to 193, and 200 to 207; these read CEPCDGSG, CSTCHGHG, CPTCSGKG, and CTSCRGQG.

Belongs to the DnaJ family. As to quaternary structure, homodimer. Zn(2+) is required as a cofactor.

It is found in the cytoplasm. Functionally, participates actively in the response to hyperosmotic and heat shock by preventing the aggregation of stress-denatured proteins and by disaggregating proteins, also in an autonomous, DnaK-independent fashion. Unfolded proteins bind initially to DnaJ; upon interaction with the DnaJ-bound protein, DnaK hydrolyzes its bound ATP, resulting in the formation of a stable complex. GrpE releases ADP from DnaK; ATP binding to DnaK triggers the release of the substrate protein, thus completing the reaction cycle. Several rounds of ATP-dependent interactions between DnaJ, DnaK and GrpE are required for fully efficient folding. Also involved, together with DnaK and GrpE, in the DNA replication of plasmids through activation of initiation proteins. This chain is Chaperone protein DnaJ, found in Colwellia psychrerythraea (strain 34H / ATCC BAA-681) (Vibrio psychroerythus).